The sequence spans 227 residues: Enolase-phosphatase E1 (227 aa).

Belongs to the HAD-like hydrolase superfamily. MasA/MtnC family. As to quaternary structure, monomer. Mg(2+) is required as a cofactor.

It catalyses the reaction 5-methylsulfanyl-2,3-dioxopentyl phosphate + H2O = 1,2-dihydroxy-5-(methylsulfanyl)pent-1-en-3-one + phosphate. It functions in the pathway amino-acid biosynthesis; L-methionine biosynthesis via salvage pathway; L-methionine from S-methyl-5-thio-alpha-D-ribose 1-phosphate: step 3/6. The protein operates within amino-acid biosynthesis; L-methionine biosynthesis via salvage pathway; L-methionine from S-methyl-5-thio-alpha-D-ribose 1-phosphate: step 4/6. Its function is as follows. Bifunctional enzyme that catalyzes the enolization of 2,3-diketo-5-methylthiopentyl-1-phosphate (DK-MTP-1-P) into the intermediate 2-hydroxy-3-keto-5-methylthiopentenyl-1-phosphate (HK-MTPenyl-1-P), which is then dephosphorylated to form the acireductone 1,2-dihydroxy-3-keto-5-methylthiopentene (DHK-MTPene). The sequence is that of Enolase-phosphatase E1 from Azotobacter vinelandii (strain DJ / ATCC BAA-1303).